A 364-amino-acid polypeptide reads, in one-letter code: Suberization-associated anionic peroxidase 1 (364 aa).

An N-terminal signal peptide occupies residues Met1–Tyr25. Asn36 carries an N-linked (GlcNAc...) asparagine glycan. 2 cysteine pairs are disulfide-bonded: Cys81-Cys160 and Cys112-Cys117. His110 acts as the Proton acceptor in catalysis. The Ca(2+) site is built by Asp111, Val114, Gly116, and Asp118. Residues Asn127, Asn162, and Asn200 are each glycosylated (N-linked (GlcNAc...) asparagine). 2 cysteine pairs are disulfide-bonded: Cys167-Cys353 and Cys246-Cys265. Pro209 is a binding site for substrate. 2 N-linked (GlcNAc...) asparagine glycosylation sites follow: Asn214 and Asn226. Residue His239 coordinates heme b. Ca(2+) is bound at residue Thr240. The N-linked (GlcNAc...) asparagine glycan is linked to Asn264. Residues Asp278, Thr280, and Asp285 each contribute to the Ca(2+) site.

This sequence belongs to the peroxidase family. Classical plant (class III) peroxidase subfamily. The cofactor is Ca(2+). Heme b serves as cofactor.

Its subcellular location is the secreted. The enzyme catalyses 2 a phenolic donor + H2O2 = 2 a phenolic radical donor + 2 H2O. Removal of H(2)O(2), oxidation of toxic reductants, biosynthesis and degradation of lignin, suberization, auxin catabolism, response to environmental stresses such as wounding, pathogen attack and oxidative stress. These functions might be dependent on each isozyme/isoform in each plant tissue. Functionally, suggested to catalyze the deposition of the aromatic residues of suberin on the cell wall and thus play a role in cell-suberization. This is Suberization-associated anionic peroxidase 1 (TAP1) from Solanum lycopersicum (Tomato).